Here is a 421-residue protein sequence, read N- to C-terminus: Atrochrysone carboxyl ACP thioesterase (421 aa).

Zn(2+) contacts are provided by His207, His209, Asp211, and His212. The Proton donor/acceptor role is filled by Asp211.

It belongs to the metallo-beta-lactamase superfamily. It depends on Zn(2+) as a cofactor. As to expression, specifically expressed in conidia.

The catalysed reaction is atrochrysone carboxyl-[ACP] + H2O = atrochrysone carboxylate + holo-[ACP] + H(+). It participates in secondary metabolite biosynthesis. Functionally, atrochrysone carboxyl ACP thioesterase; part of the gene cluster that mediates the biosynthesis of trypacidin, a mycotoxin with antiprotozoal activity and that plays a role in the infection process. The pathway begins with the synthesis of atrochrysone thioester by the polyketide synthase (PKS) tpcC. The atrochrysone carboxyl ACP thioesterase tpcB then breaks the thioester bond and releases the atrochrysone carboxylic acid from tpcC. The decarboxylase tpcK converts atrochrysone carboxylic acid to atrochrysone which is further reduced into emodin anthrone. The next step is performed by the emodin anthrone oxygenase tpcL that catalyzes the oxidation of emodin anthrone to emodin. Emodin O-methyltransferase encoded by tpcA catalyzes methylation of the 8-hydroxy group of emodin to form questin. Ring cleavage of questin by questin oxidase tpcI leads to desmethylsulochrin via several intermediates including questin epoxide. Another methylation step catalyzed by tpcM leads to the formation of sulochrin which is further converted to monomethylsulfochrin by tpcH. Finally, the tpcJ catalyzes the conversion of monomethylsulfochrin to trypacidin. Trypacidin is toxic for human pulmonary and bronchial epithelial cells by initiating the intracellular formation of nitric oxide (NO) and hydrogen peroxide (H(2)O(2)), thus triggering host necrotic cell death. The trypacidin pathway is also able to produce endocrocin via a distinct route from the endocrocin Enc pathway. This Aspergillus fumigatus (strain ATCC MYA-4609 / CBS 101355 / FGSC A1100 / Af293) (Neosartorya fumigata) protein is Atrochrysone carboxyl ACP thioesterase.